The following is a 698-amino-acid chain: Methionine synthase reductase (698 aa).

One can recognise a Flavodoxin-like domain in the interval 5–147 (LLLYATQQGQ…VVEPWIAGLW (143 aa)). FMN is bound at residue 93-124 (LLGLGDSEYTYFCNGGKIIDKRLQELGARHFY). The interval 166–247 (ALPVASPASS…ASLNIPGLPP (82 aa)) is hinge. Phosphoserine is present on residues S171 and S189. In terms of domain architecture, FAD-binding FR-type spans 271–533 (DPVFQVPISK…PRTTNSFHLP (263 aa)). Residue K291 coordinates NADP(+). FAD-binding positions include 451 to 454 (RPYS) and 487 to 490 (GVCT). Residues 610–611 (SR), 624–626 (YVQ), and D659 each bind NADP(+). Residue W697 coordinates FAD.

Forms a multiprotein complex with MMACHC, MMADHC and MTR. FAD is required as a cofactor. FMN serves as cofactor. Found in all tissues tested, particularly abundant in skeletal muscle.

Its subcellular location is the cytoplasm. The catalysed reaction is 2 methylcob(III)alamin-[methionine synthase] + 2 S-adenosyl-L-homocysteine + NADP(+) + H(+) = 2 cob(II)alamin-[methionine synthase] + 2 S-adenosyl-L-methionine + NADPH. It carries out the reaction 2 cob(II)alamin + A + 2 H2O + 2 H(+) = 2 aquacob(III)alamin + AH2. In terms of biological role, key enzyme in methionine and folate homeostasis responsible for the reactivation of methionine synthase (MTR/MS) activity by catalyzing the reductive methylation of MTR-bound cob(II)alamin. Cobalamin (vitamin B12) forms a complex with MTR to serve as an intermediary in methyl transfer reactions that cycles between MTR-bound methylcob(III)alamin and MTR bound-cob(I)alamin forms, and occasional oxidative escape of the cob(I)alamin intermediate during the catalytic cycle leads to the inactive cob(II)alamin species. The processing of cobalamin in the cytosol occurs in a multiprotein complex composed of at least MMACHC, MMADHC, MTRR and MTR which may contribute to shuttle safely and efficiently cobalamin towards MTR in order to produce methionine. Also necessary for the utilization of methyl groups from the folate cycle, thereby affecting transgenerational epigenetic inheritance. Also acts as a molecular chaperone for methionine synthase by stabilizing apoMTR and incorporating methylcob(III)alamin into apoMTR to form the holoenzyme. Also serves as an aquacob(III)alamin reductase by reducing aquacob(III)alamin to cob(II)alamin; this reduction leads to stimulation of the conversion of apoMTR and aquacob(III)alamin to MTR holoenzyme. The protein is Methionine synthase reductase of Homo sapiens (Human).